The sequence spans 329 residues: Glutamine synthetase (329 aa).

The 83-residue stretch at 4–86 folds into the GS beta-grasp domain; that stretch reads YKLEYIWLDA…VMCEVMMPDA (83 aa). The 241-residue stretch at 89–329 folds into the GS catalytic domain; the sequence is PHASNTRATV…GDPYQMLLSS (241 aa). Residues Glu-109 and Glu-111 each contribute to the Mg(2+) site. Glu-167 contacts ATP. Positions 172 and 179 each coordinate Mg(2+). Glu-278 contributes to the L-glutamate binding site.

Belongs to the glutamine synthetase family. Homooctamer and homotetramer. Mg(2+) serves as cofactor.

Its subcellular location is the cytoplasm. The enzyme catalyses L-glutamate + NH4(+) + ATP = L-glutamine + ADP + phosphate + H(+). Its function is as follows. Catalyzes the ATP-dependent biosynthesis of glutamine from glutamate and ammonia. This is Glutamine synthetase from Rhizobium meliloti (Ensifer meliloti).